The sequence spans 435 residues: NADH-quinone oxidoreductase subunit D (435 aa).

This sequence belongs to the complex I 49 kDa subunit family. In terms of assembly, NDH-1 is composed of 14 different subunits. Subunits NuoB, C, D, E, F, and G constitute the peripheral sector of the complex.

The protein resides in the cell inner membrane. The enzyme catalyses a quinone + NADH + 5 H(+)(in) = a quinol + NAD(+) + 4 H(+)(out). Its function is as follows. NDH-1 shuttles electrons from NADH, via FMN and iron-sulfur (Fe-S) centers, to quinones in the respiratory chain. The immediate electron acceptor for the enzyme in this species is believed to be ubiquinone. Couples the redox reaction to proton translocation (for every two electrons transferred, four hydrogen ions are translocated across the cytoplasmic membrane), and thus conserves the redox energy in a proton gradient. This chain is NADH-quinone oxidoreductase subunit D, found in Xanthomonas oryzae pv. oryzae (strain MAFF 311018).